We begin with the raw amino-acid sequence, 179 residues long: Cytochrome b6-f complex iron-sulfur subunit (179 aa).

Residues 21 to 43 (LLTFGTVTGVALGALYPVVNYFI) form a helical membrane-spanning segment. Residues 61–162 (GNDVSVTKFL…TNVSDDKIVL (102 aa)) form the Rieske domain. [2Fe-2S] cluster is bound by residues Cys-108, His-110, Cys-126, and His-129. Cys-113 and Cys-128 are joined by a disulfide.

It belongs to the Rieske iron-sulfur protein family. The 4 large subunits of the cytochrome b6-f complex are cytochrome b6, subunit IV (17 kDa polypeptide, PetD), cytochrome f and the Rieske protein, while the 4 small subunits are PetG, PetL, PetM and PetN. The complex functions as a dimer. [2Fe-2S] cluster serves as cofactor.

The protein resides in the cellular thylakoid membrane. It carries out the reaction 2 oxidized [plastocyanin] + a plastoquinol + 2 H(+)(in) = 2 reduced [plastocyanin] + a plastoquinone + 4 H(+)(out). Component of the cytochrome b6-f complex, which mediates electron transfer between photosystem II (PSII) and photosystem I (PSI), cyclic electron flow around PSI, and state transitions. The sequence is that of Cytochrome b6-f complex iron-sulfur subunit from Nostoc punctiforme (strain ATCC 29133 / PCC 73102).